The chain runs to 525 residues: MADTHTQRPRPVALLILDGYGQNDDTEYNAVYSARTPVMDALKQRYPSTLLHTDGKYVGLPDGQMGNSEVGHMNLGAGRIVYQDFTRITKAIEDNELASNPVLTAPIDAAVAAGRAVHLLGLLSPGGVHSHEDHILAVAALAAERGAKHVYLHAFLDGRDTAPKSARASLERANARLAELFGADNAYVASIVGRYYAMDRDNRWDRVEQAYRVIVEGEGSQVATSAEAGLDAAYERGETDEFVAATSIRPHGEPVRMADGDAALFLNFRADRARELTRAFVEDDFSGFTRQARPKLAHEGLVMLTEYAADIPAPVAFPPTDLVNTLGETVAKRGLKQLRIAETEKYAHVTFFFSGGREDEFEGEHRELIPSPQDVKTYDEKPEMSAYELTDKLVAAIDAGTYDLIVCNYANGDMVGHSGNFDAAVKAIEAVDDCLGRVIEAIERAGGECLVTADHGNAEQMVHPETGNPQTAHTTFQVPLIYVTPRQGATLADDGSLCDLAPTLLTMMHEPVPEEMTGRVLIGNT.

Mn(2+)-binding residues include aspartate 18 and serine 68. Residue serine 68 is the Phosphoserine intermediate of the active site. Substrate is bound by residues histidine 129, 159 to 160, arginine 194, arginine 200, 269 to 272, and lysine 345; these read RD and RADR. Aspartate 413, histidine 417, aspartate 454, histidine 455, and histidine 473 together coordinate Mn(2+).

This sequence belongs to the BPG-independent phosphoglycerate mutase family. As to quaternary structure, monomer. The cofactor is Mn(2+).

It catalyses the reaction (2R)-2-phosphoglycerate = (2R)-3-phosphoglycerate. It functions in the pathway carbohydrate degradation; glycolysis; pyruvate from D-glyceraldehyde 3-phosphate: step 3/5. Functionally, catalyzes the interconversion of 2-phosphoglycerate and 3-phosphoglycerate. This chain is 2,3-bisphosphoglycerate-independent phosphoglycerate mutase, found in Chromohalobacter salexigens (strain ATCC BAA-138 / DSM 3043 / CIP 106854 / NCIMB 13768 / 1H11).